A 319-amino-acid polypeptide reads, in one-letter code: Ribonuclease Z (319 aa).

7 residues coordinate Zn(2+): His-62, His-64, Asp-66, His-67, His-145, Asp-215, and His-273. Asp-66 functions as the Proton acceptor in the catalytic mechanism.

This sequence belongs to the RNase Z family. Homodimer. Requires Zn(2+) as cofactor.

The enzyme catalyses Endonucleolytic cleavage of RNA, removing extra 3' nucleotides from tRNA precursor, generating 3' termini of tRNAs. A 3'-hydroxy group is left at the tRNA terminus and a 5'-phosphoryl group is left at the trailer molecule.. Zinc phosphodiesterase, which displays some tRNA 3'-processing endonuclease activity. Probably involved in tRNA maturation, by removing a 3'-trailer from precursor tRNA. The polypeptide is Ribonuclease Z (Borrelia recurrentis (strain A1)).